The sequence spans 396 residues: ATP-dependent RNA helicase eIF4A (396 aa).

Residues 22–50 carry the Q motif motif; sequence YSFDDLKLKEELLRGIFGYGFVEPSAIQQ. One can recognise a Helicase ATP-binding domain in the interval 53 to 223; sequence ILPIIEGKDV…SKFMKDPVRI (171 aa). 66 to 73 lines the ATP pocket; it reads AQSGTGKT. Positions 171–174 match the DEAD box motif; it reads DEAD. Residues 234–395 enclose the Helicase C-terminal domain; sequence GIGQYYVNVE…ELPSSISELF (162 aa).

Belongs to the DEAD box helicase family. eIF4A subfamily. In terms of assembly, component of the eIF4F complex, which composition varies with external and internal environmental conditions. It is composed of at least eIF4A, eIF4E and eIF4G.

The protein localises to the cytoplasm. It catalyses the reaction ATP + H2O = ADP + phosphate + H(+). Functionally, ATP-dependent RNA helicase which is a subunit of the eIF4F complex involved in cap recognition and is required for mRNA binding to ribosome. In the current model of translation initiation, eIF4A unwinds RNA secondary structures in the 5'-UTR of mRNAs which is necessary to allow efficient binding of the small ribosomal subunit, and subsequent scanning for the initiator codon. The protein is ATP-dependent RNA helicase eIF4A (TIF1) of Kluyveromyces lactis (strain ATCC 8585 / CBS 2359 / DSM 70799 / NBRC 1267 / NRRL Y-1140 / WM37) (Yeast).